Here is a 334-residue protein sequence, read N- to C-terminus: Probable 3-hydroxyisobutyrate dehydrogenase-like 1, mitochondrial (334 aa).

The transit peptide at 1 to 23 (MPLLLRRFPSPSVVSSFFLRRSM) directs the protein to the mitochondrion. An N-acetylalanine modification is found at Ala-24. NAD(+)-binding positions include 38 to 67 (TKIG…TVFN) and Thr-133. Lys-207 is a catalytic residue. Lys-275 is a binding site for NAD(+).

This sequence belongs to the HIBADH-related family. 3-hydroxyisobutyrate dehydrogenase subfamily.

It localises to the mitochondrion. The enzyme catalyses 3-hydroxy-2-methylpropanoate + NAD(+) = 2-methyl-3-oxopropanoate + NADH + H(+). It participates in amino-acid degradation; L-valine degradation. In Arabidopsis thaliana (Mouse-ear cress), this protein is Probable 3-hydroxyisobutyrate dehydrogenase-like 1, mitochondrial.